The following is a 245-amino-acid chain: Biosynthetic peptidoglycan transglycosylase (245 aa).

A helical membrane pass occupies residues 20-42 (VYAGSVFAGAWLATQLFYLAQIA).

Belongs to the glycosyltransferase 51 family.

The protein resides in the cell inner membrane. The enzyme catalyses [GlcNAc-(1-&gt;4)-Mur2Ac(oyl-L-Ala-gamma-D-Glu-L-Lys-D-Ala-D-Ala)](n)-di-trans,octa-cis-undecaprenyl diphosphate + beta-D-GlcNAc-(1-&gt;4)-Mur2Ac(oyl-L-Ala-gamma-D-Glu-L-Lys-D-Ala-D-Ala)-di-trans,octa-cis-undecaprenyl diphosphate = [GlcNAc-(1-&gt;4)-Mur2Ac(oyl-L-Ala-gamma-D-Glu-L-Lys-D-Ala-D-Ala)](n+1)-di-trans,octa-cis-undecaprenyl diphosphate + di-trans,octa-cis-undecaprenyl diphosphate + H(+). It participates in cell wall biogenesis; peptidoglycan biosynthesis. Its function is as follows. Peptidoglycan polymerase that catalyzes glycan chain elongation from lipid-linked precursors. This chain is Biosynthetic peptidoglycan transglycosylase, found in Burkholderia cenocepacia (strain HI2424).